A 104-amino-acid chain; its full sequence is Large ribosomal subunit protein uL24 (104 aa).

This sequence belongs to the universal ribosomal protein uL24 family. Part of the 50S ribosomal subunit.

Functionally, one of two assembly initiator proteins, it binds directly to the 5'-end of the 23S rRNA, where it nucleates assembly of the 50S subunit. Its function is as follows. One of the proteins that surrounds the polypeptide exit tunnel on the outside of the subunit. This is Large ribosomal subunit protein uL24 from Shewanella sp. (strain W3-18-1).